The primary structure comprises 879 residues: Protein translocase subunit SecA (879 aa).

ATP contacts are provided by residues glutamine 87, glycine 105–threonine 109, and aspartate 509. The interval isoleucine 834–alanine 879 is disordered. Zn(2+)-binding residues include cysteine 856, cysteine 858, cysteine 867, and cysteine 868.

Belongs to the SecA family. In terms of assembly, monomer and homodimer. Part of the essential Sec protein translocation apparatus which comprises SecA, SecYEG and auxiliary proteins SecDF-YajC and YidC. Zn(2+) serves as cofactor.

It localises to the cell inner membrane. Its subcellular location is the cytoplasm. It catalyses the reaction ATP + H2O + cellular proteinSide 1 = ADP + phosphate + cellular proteinSide 2.. Functionally, part of the Sec protein translocase complex. Interacts with the SecYEG preprotein conducting channel. Has a central role in coupling the hydrolysis of ATP to the transfer of proteins into and across the cell membrane, serving as an ATP-driven molecular motor driving the stepwise translocation of polypeptide chains across the membrane. The protein is Protein translocase subunit SecA of Sulfurovum sp. (strain NBC37-1).